The sequence spans 701 residues: Arachidonate 12-lipoxygenase, 12R-type (701 aa).

A PLAT domain is found at 2–119 (ATYKVKVATG…TLALREATGK (118 aa)). Residues 120–701 (ITADDTLPIL…PVLIENSISI (582 aa)) form the Lipoxygenase domain. His398, His403, His578, Asn582, and Ile701 together coordinate Fe cation.

Belongs to the lipoxygenase family. It depends on Fe cation as a cofactor. As to expression, expressed in skin epidermis and other stratified epithelia including tongue and forestomach. Low levels of expression are found in trachea, brain and lung. Not expressed in intestine, liver, kidney, adipose tissue, muscle or hematopoietic cells.

It is found in the cytoplasm. Its subcellular location is the perinuclear region. The enzyme catalyses 1-O-methyl-(5Z,8Z,11Z,14Z)-eicosatetraenoate + O2 = 1-O-methyl (5Z,8Z,10E,12R,14Z)-hydroperoxyiecosatetraenoate. The catalysed reaction is 1-O-methyl-(5Z,8Z,11Z,14Z)-eicosatetraenoate + O2 = 1-O-methyl-8-hydroperoxy-(5Z,9E,11Z,14Z)-eicosatetraenoate. It catalyses the reaction (5Z,8Z,11Z,14Z)-eicosatetraenoate + O2 = (12R)-hydroperoxy-(5Z,8Z,10E,14Z)-eicosatetraenoate. It carries out the reaction N-[omega-(9Z,12Z)-octadecadienoyloxy]acyl-beta-D-glucosyl-(1&lt;-&gt;1)-octadecasphing-4E-enine + O2 = N-[omega-(9R)-hydroperoxy-(10E,12Z)-octadecadienoyloxy]acyl-beta-D-glucosyl-(1&lt;-&gt;1)-octadecasphing-4E-enine. The enzyme catalyses a N-[omega-(9Z,12Z)-octadecadienoyloxy]-acylsphin-4E-enine + O2 = a N-[omega-(9R)-hydroperoxy-(10E,12Z)-octadecadienoyloxy]-acylsphin-4E-enine. The catalysed reaction is (6Z,9Z,12Z)-octadecatrienoate + O2 = 10-hydroperoxy-(6Z,8E,12Z)-octadecatrienoate. It catalyses the reaction (4Z,7Z,10Z,13Z,16Z,19Z)-docosahexaenoate + O2 = 14-hydroperoxy-(4Z,7Z,10Z,12E,16Z,19Z)-docosahexaenoate. It carries out the reaction (8Z,11Z,14Z)-eicosatrienoate + O2 = (8Z,10E,14Z)-12-hydroperoxyeicosatrienoate. The enzyme catalyses (5Z,8Z,11Z,14Z,17Z)-eicosapentaenoate + O2 = (5Z,7Z,8Z,10E,14Z,17Z)-12-hydroperoxyeicosapentaenoate. The catalysed reaction is (6Z,9Z,12Z)-octadecatrienoate + O2 = 10R-hydroperoxy-(6Z,8E,12Z)-octadecatrienoate. It catalyses the reaction 1-O-methyl-(5Z,8Z,11Z,14Z)-eicosatetraenoate + O2 = 1-O-methyl-(8R)-hydroperoxy-(5Z,9E,11Z,14Z)-eicosatrienoate. It carries out the reaction 1-O-methyl-(9Z,12Z)-octadecadienoate + O2 = 1-O-methyl-(9R)-hydroperoxy-(10E,12Z)-octadecadienoate. The enzyme catalyses 1-O-methyl-20-hydroxy-(5Z,8Z,11Z,14Z)-eicosatetraenoate + O2 = 1-O-methyl-8-hydroperoxy-20-hydroxy-(5Z,9E,11Z,14Z)-eicosatetraenoate. The catalysed reaction is 1-O-methyl-20-hydroxy-(5Z,8Z,11Z,14Z)-eicosatetraenoate + O2 = 1-O-methyl-12-hydroperoxy-20-hydroxy-(5Z,8Z,10E,14Z)-eicosatetraenoate. It catalyses the reaction 1-O-methyl-20-hydroxy-(5Z,8Z,11Z,14Z)-eicosatetraenoate + O2 = 1-O-methyl-9-hydroperoxy-20-hydroxy-(5Z,7E,11Z,14Z)-eicosatetraenoate. It carries out the reaction 1-O-methyl-(9Z,12Z)-octadecadienoate + O2 = 1-O-methyl-(13S)-hydroperoxy-(9Z,11E)-octadecadienoate. Its pathway is lipid metabolism; hydroperoxy eicosatetraenoic acid biosynthesis. It participates in lipid metabolism; sphingolipid metabolism. Its activity is regulated as follows. Increased by calcium. Functionally, catalyzes the regio and stereo-specific incorporation of a single molecule of dioxygen into free and esterified polyunsaturated fatty acids generating lipid hydroperoxides that can be further reduced to the corresponding hydroxy species. Does not convert arachidonic acid to (12R)-hydroperoxyeicosatetraenoic acid/(12R)-HPETE. In the skin, acts upstream of ALOXE3 on the lineolate moiety of esterified omega-hydroxyacyl-sphingosine (EOS) ceramides to produce an epoxy-ketone derivative, a crucial step in the conjugation of omega-hydroxyceramide to membrane proteins. Therefore plays a crucial role in the synthesis of corneocytes lipid envelope and the establishment of the skin barrier to water loss. May also play a role in the regulation of the expression of airway mucins. The chain is Arachidonate 12-lipoxygenase, 12R-type from Mus musculus (Mouse).